Consider the following 152-residue polypeptide: Phospholipase A2 pkP2 (152 aa).

An N-terminal signal peptide occupies residues 1-21 (MNPAHLLVLLAVCVSLLGASA). The propeptide occupies 22 to 27 (IPPLPL). 7 disulfides stabilise this stretch: Cys-38-Cys-104, Cys-54-Cys-151, Cys-56-Cys-72, Cys-71-Cys-132, Cys-78-Cys-125, Cys-88-Cys-118, and Cys-111-Cys-123. Residues Tyr-55, Gly-57, and Gly-59 each coordinate Ca(2+). Residue His-75 is part of the active site. Asp-76 is a binding site for Ca(2+). The active site involves Asp-126.

It belongs to the phospholipase A2 family. Group I subfamily. It depends on Ca(2+) as a cofactor.

It is found in the secreted. The enzyme catalyses a 1,2-diacyl-sn-glycero-3-phosphocholine + H2O = a 1-acyl-sn-glycero-3-phosphocholine + a fatty acid + H(+). In terms of biological role, PA2 catalyzes the calcium-dependent hydrolysis of the 2-acyl groups in 3-sn-phosphoglycerides. This is Phospholipase A2 pkP2 from Laticauda semifasciata (Black-banded sea krait).